We begin with the raw amino-acid sequence, 253 residues long: A-type ATP synthase subunit B (253 aa).

Belongs to the ATPase alpha/beta chains family. As to quaternary structure, has multiple subunits with at least A(3), B(3), C, D, E, F, H, I and proteolipid K(x).

It is found in the cell membrane. In terms of biological role, component of the A-type ATP synthase that produces ATP from ADP in the presence of a proton gradient across the membrane. The B chain is a regulatory subunit. This chain is A-type ATP synthase subunit B, found in Methanothermococcus thermolithotrophicus (Methanococcus thermolithotrophicus).